A 124-amino-acid chain; its full sequence is V-type proton ATPase subunit F (124 aa).

It belongs to the V-ATPase F subunit family. As to quaternary structure, V-ATPase is a heteromultimeric enzyme composed of a peripheral catalytic V1 complex (components A to H) attached to an integral membrane V0 proton pore complex (components: a, c, c', c'', d, e, f and VOA1).

The protein localises to the vacuole membrane. Subunit of the V1 complex of vacuolar(H+)-ATPase (V-ATPase), a multisubunit enzyme composed of a peripheral complex (V1) that hydrolyzes ATP and a membrane integral complex (V0) that translocates protons. V-ATPase is responsible for acidifying and maintaining the pH of intracellular compartments. The polypeptide is V-type proton ATPase subunit F (vma-7) (Neurospora crassa (strain ATCC 24698 / 74-OR23-1A / CBS 708.71 / DSM 1257 / FGSC 987)).